A 428-amino-acid polypeptide reads, in one-letter code: Enolase (428 aa).

A (2R)-2-phosphoglycerate-binding site is contributed by Gln162. Glu204 acts as the Proton donor in catalysis. Residues Asp241, Glu288, and Asp315 each contribute to the Mg(2+) site. (2R)-2-phosphoglycerate-binding residues include Lys340, Arg369, Ser370, and Lys391. Lys340 (proton acceptor) is an active-site residue.

It belongs to the enolase family. Mg(2+) is required as a cofactor.

It is found in the cytoplasm. It localises to the secreted. The protein resides in the cell surface. It catalyses the reaction (2R)-2-phosphoglycerate = phosphoenolpyruvate + H2O. It participates in carbohydrate degradation; glycolysis; pyruvate from D-glyceraldehyde 3-phosphate: step 4/5. Functionally, catalyzes the reversible conversion of 2-phosphoglycerate (2-PG) into phosphoenolpyruvate (PEP). It is essential for the degradation of carbohydrates via glycolysis. This Azobacteroides pseudotrichonymphae genomovar. CFP2 protein is Enolase.